Reading from the N-terminus, the 196-residue chain is ATP-dependent Clp protease proteolytic subunit (196 aa).

Residue S101 is the Nucleophile of the active site. H126 is a catalytic residue.

It belongs to the peptidase S14 family. As to quaternary structure, component of the chloroplastic Clp protease core complex.

It localises to the plastid. The protein localises to the chloroplast stroma. It carries out the reaction Hydrolysis of proteins to small peptides in the presence of ATP and magnesium. alpha-casein is the usual test substrate. In the absence of ATP, only oligopeptides shorter than five residues are hydrolyzed (such as succinyl-Leu-Tyr-|-NHMec, and Leu-Tyr-Leu-|-Tyr-Trp, in which cleavage of the -Tyr-|-Leu- and -Tyr-|-Trp bonds also occurs).. Functionally, cleaves peptides in various proteins in a process that requires ATP hydrolysis. Has a chymotrypsin-like activity. Plays a major role in the degradation of misfolded proteins. This Helianthus annuus (Common sunflower) protein is ATP-dependent Clp protease proteolytic subunit.